A 69-amino-acid polypeptide reads, in one-letter code: MAKIGENVPLLIDKAVDFMASSQAFREYLNKTPPRDYVPSEVPSESAPIYLQRLEYYRRLYRPKEEERG.

This is an uncharacterized protein from Salmonella paratyphi A (strain ATCC 9150 / SARB42).